The following is a 141-amino-acid chain: Arsenate reductase (141 aa).

C12 serves as the catalytic Nucleophile; cysteine thioarsenate intermediate.

The protein belongs to the ArsC family.

It catalyses the reaction [glutaredoxin]-dithiol + arsenate + glutathione + H(+) = glutathionyl-S-S-[glutaredoxin] + arsenite + H2O. Involved in resistance to arsenate. Catalyzes the reduction of arsenate [As(V)] to arsenite [As(III)]. This is Arsenate reductase from Escherichia coli.